Reading from the N-terminus, the 170-residue chain is Protein ripply3 (170 aa).

A WRPW motif motif is present at residues 40–43 (WRPW). Residues 51-61 (ELDGQQRRSGE) show a composition bias toward basic and acidic residues. Residues 51-78 (ELDGQQRRSGEADGVPTNTGPKGALGFQ) form a disordered region. The tract at residues 79-114 (HPVRLYMPKSKTSEYLQHMGRKVLASFPVQATIHFY) is ripply homology domain. Over residues 142–155 (GVDSSRGSSDNYSV) the composition is skewed to polar residues. The disordered stretch occupies residues 142-170 (GVDSSRGSSDNYSVQGGPKRNIGSHAGSA).

Belongs to the ripply family. In terms of assembly, interacts with tbx1 and tle4/grg4. In terms of tissue distribution, at neurula stage, expressed in the region close to the heart mesoderm. At the tailbud stage, expressed in the pharyngeal region.

The protein localises to the nucleus. In terms of biological role, acts as a transcriptional corepressor. Negative regulator of the transcriptional activity of tbx1 that plays a key role in pharyngeal development. Plays a role in the formation of the anteroposterior (AP) axis during embryonic development; required to establish the posterolateral border of the pre-placodal ectoderm (PPE) acting downstream of the retinoic acid receptor (RAR) signaling. In Xenopus laevis (African clawed frog), this protein is Protein ripply3 (ripply3).